Here is a 149-residue protein sequence, read N- to C-terminus: Stathmin (149 aa).

The residue at position 2 (alanine 2) is an N-acetylalanine. Residue serine 4 is modified to Phosphoserine. One can recognise an SLD domain in the interval 4–145 (SDIQVKELEK…NKESKDPADE (142 aa)). Lysine 9 carries the N6-acetyllysine modification. The residue at position 16 (serine 16) is a Phosphoserine; by PKA. A Phosphoserine; by CDK1, MAPK1 and MAPK3 modification is found at serine 25. Residues 27 to 46 (RSKESVPDFPLSPPKKKDLS) are disordered. Residue lysine 29 is modified to N6-methyllysine. Serine 31 carries the phosphoserine modification. Serine 38 bears the Phosphoserine; by CDK1, MAPK1 and MAPK3 mark. A coiled-coil region spans residues 41–140 (KKKDLSLEEI…EEVRKNKESK (100 aa)). Serine 63 bears the Phosphoserine; by PKA mark. Residues lysine 100 and lysine 119 each carry the N6-acetyllysine modification. Basic and acidic residues predominate over residues 104-143 (KMEANKENREAQMAAKLERLREKDKHVEEVRKNKESKDPA). Residues 104–149 (KMEANKENREAQMAAKLERLREKDKHVEEVRKNKESKDPADETEAD) form a disordered region.

It belongs to the stathmin family. In terms of assembly, binds to two alpha/beta-tubulin heterodimers. Interacts with KIST. In terms of processing, many different phosphorylated forms are observed depending on specific combinations among the sites which can be phosphorylated. MAPK is responsible for the phosphorylation of stathmin in response to NGF. Phosphorylation at Ser-16 seems to be required for neuron polarization. As to expression, highly expressed in the lateral nucleus of the amygdala.

The protein resides in the cytoplasm. The protein localises to the cytoskeleton. Its function is as follows. Involved in the regulation of the microtubule (MT) filament system by destabilizing microtubules. Prevents assembly and promotes disassembly of microtubules. Phosphorylation at Ser-16 may be required for axon formation during neurogenesis. Involved in the control of the learned and innate fear. This is Stathmin (Stmn1) from Mus musculus (Mouse).